Here is a 202-residue protein sequence, read N- to C-terminus: Probable chemoreceptor glutamine deamidase CheD 2 (202 aa).

Belongs to the CheD family.

The enzyme catalyses L-glutaminyl-[protein] + H2O = L-glutamyl-[protein] + NH4(+). Functionally, probably deamidates glutamine residues to glutamate on methyl-accepting chemotaxis receptors (MCPs), playing an important role in chemotaxis. This is Probable chemoreceptor glutamine deamidase CheD 2 from Shewanella oneidensis (strain ATCC 700550 / JCM 31522 / CIP 106686 / LMG 19005 / NCIMB 14063 / MR-1).